We begin with the raw amino-acid sequence, 396 residues long: Elongation factor Tu (396 aa).

In terms of domain architecture, tr-type G spans 10–206 (KPHCNIGTIG…TVDAYIPQPE (197 aa)). The tract at residues 19–26 (GHVDHGKT) is G1. GTP is bound at residue 19-26 (GHVDHGKT). Residue threonine 26 coordinates Mg(2+). The tract at residues 60 to 64 (GITIS) is G2. The interval 81–84 (DCPG) is G3. Residues 81 to 85 (DCPGH) and 136 to 139 (NKVD) each bind GTP. Residues 136 to 139 (NKVD) form a G4 region. The G5 stretch occupies residues 174–176 (SAL).

This sequence belongs to the TRAFAC class translation factor GTPase superfamily. Classic translation factor GTPase family. EF-Tu/EF-1A subfamily. Monomer.

The protein localises to the cytoplasm. It carries out the reaction GTP + H2O = GDP + phosphate + H(+). In terms of biological role, GTP hydrolase that promotes the GTP-dependent binding of aminoacyl-tRNA to the A-site of ribosomes during protein biosynthesis. The polypeptide is Elongation factor Tu (Methylocella silvestris (strain DSM 15510 / CIP 108128 / LMG 27833 / NCIMB 13906 / BL2)).